We begin with the raw amino-acid sequence, 559 residues long: DNA ligase (559 aa).

Position 247 (Glu-247) interacts with ATP. Lys-249 (N6-AMP-lysine intermediate) is an active-site residue. Positions 254, 269, 299, 339, 414, and 420 each coordinate ATP.

This sequence belongs to the ATP-dependent DNA ligase family. Mg(2+) serves as cofactor.

The catalysed reaction is ATP + (deoxyribonucleotide)n-3'-hydroxyl + 5'-phospho-(deoxyribonucleotide)m = (deoxyribonucleotide)n+m + AMP + diphosphate.. Its function is as follows. DNA ligase that seals nicks in double-stranded DNA during DNA replication, DNA recombination and DNA repair. This is DNA ligase from Pyrococcus abyssi.